Here is a 380-residue protein sequence, read N- to C-terminus: Epoxyqueuosine reductase (380 aa).

Asp-139 serves as the catalytic Proton donor. Residues 181-213 (IPFEPDDPLLDSCGDCTICVDRCPTSALVGNGQ) enclose the 4Fe-4S ferredoxin-type 1 domain. [4Fe-4S] cluster contacts are provided by Cys-193, Cys-196, Cys-199, Cys-203, Cys-219, Cys-245, Cys-248, and Cys-252. In terms of domain architecture, 4Fe-4S ferredoxin-type 2 spans 234–263 (YRYKIGNRLYGCDTCQQVCPKNRGINTEQD).

The protein belongs to the QueG family. In terms of assembly, monomer. Cob(II)alamin serves as cofactor. Requires [4Fe-4S] cluster as cofactor.

It localises to the cytoplasm. The catalysed reaction is epoxyqueuosine(34) in tRNA + AH2 = queuosine(34) in tRNA + A + H2O. It participates in tRNA modification; tRNA-queuosine biosynthesis. Its function is as follows. Catalyzes the conversion of epoxyqueuosine (oQ) to queuosine (Q), which is a hypermodified base found in the wobble positions of tRNA(Asp), tRNA(Asn), tRNA(His) and tRNA(Tyr). This is Epoxyqueuosine reductase from Staphylococcus aureus (strain NCTC 8325 / PS 47).